The chain runs to 235 residues: Fms-related tyrosine kinase 3 ligand (235 aa).

A signal peptide spans 1 to 26 (MTVLAPAWSPTTYLLLLLLLSSGLSG). Over 27-184 (TQDCSFQHSP…EATAPTAPQP (158 aa)) the chain is Extracellular. Cystine bridges form between Cys-30/Cys-111, Cys-70/Cys-153, and Cys-119/Cys-158. N-linked (GlcNAc...) asparagine glycans are attached at residues Asn-126 and Asn-149. The helical transmembrane segment at 185–205 (PLLLLLLLPVGLLLLAAAWCL) threads the bilayer. Residues 206 to 235 (HWQRTRRRTPRPGEQVPPVPSPQDLLLVEH) are Cytoplasmic-facing. A disordered region spans residues 213–235 (RTPRPGEQVPPVPSPQDLLLVEH).

As to quaternary structure, homodimer (isoform 2).

It localises to the cell membrane. Its subcellular location is the secreted. Stimulates the proliferation of early hematopoietic cells by activating FLT3. Synergizes well with a number of other colony stimulating factors and interleukins. Required for the development of B cells, and dendritic cells (DCs). The protein is Fms-related tyrosine kinase 3 ligand (FLT3LG) of Homo sapiens (Human).